The following is a 529-amino-acid chain: Putative cysteine ligase BshC (529 aa).

Positions 450–485 (VKQTKGLENLEKRLLKAQKRNLSDQLQRVIDLQCEL) form a coiled coil.

The protein belongs to the BshC family.

This is Putative cysteine ligase BshC from Flavobacterium johnsoniae (strain ATCC 17061 / DSM 2064 / JCM 8514 / BCRC 14874 / CCUG 350202 / NBRC 14942 / NCIMB 11054 / UW101) (Cytophaga johnsonae).